A 129-amino-acid chain; its full sequence is Antimicrobial peptide NK-lysin (129 aa).

Residues 1 to 6 (PGLAFS) form the signal peptide. Residues 7–46 (GLTPEHSALARAHPCDGEQFCQNLAPEDPQGDQLLQREEL) constitute a propeptide that is removed on maturation. One can recognise a Saposin B-type domain in the interval 46–126 (LGLICESCRK…VDIKICKEKT (81 aa)). Intrachain disulfides connect C50-C122, C53-C116, and C81-C91. Positions 125–129 (KTGLI) are excised as a propeptide.

Cytotoxic T and NK cells.

Its subcellular location is the secreted. In terms of biological role, may be an effector molecule of cytotoxic activity. High activity against E.coli and B.megaterium, moderate against A.calcoaceticus and S.pyogenes. No activity against P.aeruginosa, S.aureus and Salmonella. Has some antifungal activity against C.albicans. This Sus scrofa (Pig) protein is Antimicrobial peptide NK-lysin (NKL).